We begin with the raw amino-acid sequence, 371 residues long: uncharacterized protein (371 aa).

This sequence belongs to the Gfo/Idh/MocA family.

This is an uncharacterized protein from Synechocystis sp. (strain ATCC 27184 / PCC 6803 / Kazusa).